A 356-amino-acid polypeptide reads, in one-letter code: V-type proton ATPase subunit d (356 aa).

This sequence belongs to the V-ATPase V0D/AC39 subunit family. V-ATPase is a heteromultimeric enzyme composed of a peripheral catalytic V1 complex (components A to H) attached to an integral membrane V0 proton pore complex (components: a, c, c', c'' and d).

Subunit of the integral membrane V0 complex of vacuolar ATPase. Vacuolar ATPase is responsible for acidifying a variety of intracellular compartments in eukaryotic cells, thus providing most of the energy required for transport processes in the vacuolar system. The polypeptide is V-type proton ATPase subunit d (vatD-1) (Dictyostelium discoideum (Social amoeba)).